A 453-amino-acid polypeptide reads, in one-letter code: Ribulose bisphosphate carboxylase large chain (453 aa).

The propeptide occupies 1–2 (MS). N-acetylproline is present on proline 3. Lysine 14 is modified (N6,N6,N6-trimethyllysine). Asparagine 123 and threonine 173 together coordinate substrate. Residue lysine 175 is the Proton acceptor of the active site. Lysine 177 contacts substrate. 3 residues coordinate Mg(2+): lysine 201, aspartate 203, and glutamate 204. Lysine 201 is modified (N6-carboxylysine). Histidine 294 functions as the Proton acceptor in the catalytic mechanism. Residues arginine 295, histidine 327, and serine 379 each contribute to the substrate site.

It belongs to the RuBisCO large chain family. Type I subfamily. Heterohexadecamer of 8 large chains and 8 small chains; disulfide-linked. The disulfide link is formed within the large subunit homodimers. Mg(2+) is required as a cofactor. The disulfide bond which can form in the large chain dimeric partners within the hexadecamer appears to be associated with oxidative stress and protein turnover.

It is found in the plastid. The protein resides in the chloroplast. The catalysed reaction is 2 (2R)-3-phosphoglycerate + 2 H(+) = D-ribulose 1,5-bisphosphate + CO2 + H2O. The enzyme catalyses D-ribulose 1,5-bisphosphate + O2 = 2-phosphoglycolate + (2R)-3-phosphoglycerate + 2 H(+). Functionally, ruBisCO catalyzes two reactions: the carboxylation of D-ribulose 1,5-bisphosphate, the primary event in carbon dioxide fixation, as well as the oxidative fragmentation of the pentose substrate in the photorespiration process. Both reactions occur simultaneously and in competition at the same active site. This is Ribulose bisphosphate carboxylase large chain from Galium parisiense (Wall bedstraw).